Consider the following 598-residue polypeptide: Serine/threonine-protein kinase PLK1 (598 aa).

A disordered region spans residues 1–26 (MAQVAGKKLTVAPEAGKPPGIPGSSS). A phosphoserine mark is found at Ser25 and Ser26. The Protein kinase domain maps to 44-296 (YLRGRFLGKG…IDDLLNDEFF (253 aa)). ATP is bound by residues 50-58 (LGKGGFAKC), Lys73, and Glu122. The active-site Proton acceptor is the Asp167. ATP-binding positions include 169–172 (KLGN) and Asp185. Residues 185 to 212 (DFGLATKVEYDGERKKTLCGTPNYIAPE) are activation loop. A Phosphothreonine modification is found at Thr201. Phosphoserine; by autocatalysis occurs at positions 260 and 326. A D-box that targets the protein for proteasomal degradation in anaphase motif is present at residues 328–331 (RKPL). Positions 336–360 (KGQDSPLVEKQSVPAKEEEMQQPES) are disordered. The residue at position 340 (Ser340) is a Phosphoserine. The POLO box 1 domain occupies 404 to 482 (WVSKWVDYSD…LKYFRNYMSE (79 aa)). The linker stretch occupies residues 487 to 501 (AGANITPREGDELAR). The region spanning 504-586 (FLRTWFRTRS…ARTMVEKLQS (83 aa)) is the POLO box 2 domain. The tract at residues 532 to 534 (HTK) is important for interaction with phosphorylated proteins.

The protein belongs to the protein kinase superfamily. Ser/Thr protein kinase family. As to quaternary structure, interacts with plk1 and kif2a. Interacts with fbxo5. In terms of processing, activated by phosphorylation on Thr-201 during M phase. Protein levels are down-regulated by proteasomal degradation in anaphase.

The protein localises to the nucleus. The protein resides in the cytoplasm. It localises to the cytoskeleton. Its subcellular location is the microtubule organizing center. It is found in the centrosome. The protein localises to the spindle. The protein resides in the midbody. The catalysed reaction is L-seryl-[protein] + ATP = O-phospho-L-seryl-[protein] + ADP + H(+). It catalyses the reaction L-threonyl-[protein] + ATP = O-phospho-L-threonyl-[protein] + ADP + H(+). In terms of biological role, plays multiple essential roles during mitosis. Phosphorylates the N-terminal domain of cdc25, which leads to cyclin b-cdc2 activation and mitotic entry. Also required for organization of bipolar spindles, and for exit from mitosis. Phosphorylates tpx2. The protein is Serine/threonine-protein kinase PLK1 (plk1) of Xenopus tropicalis (Western clawed frog).